Reading from the N-terminus, the 997-residue chain is Malignant fibrous histiocytoma-amplified sequence 1 homolog (997 aa).

14 LRR repeats span residues 32 to 53 (SLRQ…ADLG), 54 to 76 (DVEV…QSLS), 79 to 100 (NLHV…VYHL), 102 to 123 (RLTE…VGLL), 125 to 146 (KLKK…LGML), 148 to 170 (DLEE…QGLP), 171 to 192 (SLRT…LFHV), 194 to 216 (ALEE…IRSM), 218 to 239 (SLKI…ICEL), 241 to 262 (NLES…FGAL), 264 to 286 (KLKM…LQLV), 287 to 308 (DLEE…ISCM), 310 to 331 (KLVT…IVEL), and 333 to 354 (FLEE…FGKL). One can recognise a Roc domain in the interval 393-626 (QPAVKPRLKL…EKLLSVAEHR (234 aa)). The region spanning 637 to 861 (PKSWQMLEEL…RFSVQINSHI (225 aa)) is the COR domain.

The protein localises to the cytoplasm. Its function is as follows. Probable GTP-binding protein. Functions in innate immunity and more specifically the inflammatory response as a regulator of the Toll-like receptor TLR2 and TLR4 signaling pathways. This chain is Malignant fibrous histiocytoma-amplified sequence 1 homolog (mfhas1), found in Xenopus tropicalis (Western clawed frog).